A 458-amino-acid polypeptide reads, in one-letter code: UDP-N-acetylmuramate--L-alanine ligase (458 aa).

118 to 124 is an ATP binding site; the sequence is GTHGKTT.

Belongs to the MurCDEF family.

It localises to the cytoplasm. It carries out the reaction UDP-N-acetyl-alpha-D-muramate + L-alanine + ATP = UDP-N-acetyl-alpha-D-muramoyl-L-alanine + ADP + phosphate + H(+). It participates in cell wall biogenesis; peptidoglycan biosynthesis. In terms of biological role, cell wall formation. The chain is UDP-N-acetylmuramate--L-alanine ligase from Clostridium novyi (strain NT).